The following is a 319-amino-acid chain: tRNA(Ile)-lysidine synthase (319 aa).

Position 32 to 37 (32 to 37) interacts with ATP; sequence SGGSDS.

It belongs to the tRNA(Ile)-lysidine synthase family.

The protein resides in the cytoplasm. It catalyses the reaction cytidine(34) in tRNA(Ile2) + L-lysine + ATP = lysidine(34) in tRNA(Ile2) + AMP + diphosphate + H(+). Functionally, ligates lysine onto the cytidine present at position 34 of the AUA codon-specific tRNA(Ile) that contains the anticodon CAU, in an ATP-dependent manner. Cytidine is converted to lysidine, thus changing the amino acid specificity of the tRNA from methionine to isoleucine. In Chlamydia pneumoniae (Chlamydophila pneumoniae), this protein is tRNA(Ile)-lysidine synthase.